Reading from the N-terminus, the 299-residue chain is Small ribosomal subunit biogenesis GTPase RsgA (299 aa).

One can recognise a CP-type G domain in the interval 73 to 232; that stretch reads CSWLTRPQVA…VADTPGFNRP (160 aa). GTP contacts are provided by residues 122–125 and 174–182; these read TKGD and GPSGVGKSS. The Zn(2+) site is built by Cys257, Cys262, His264, and Cys270.

This sequence belongs to the TRAFAC class YlqF/YawG GTPase family. RsgA subfamily. In terms of assembly, monomer. Associates with 30S ribosomal subunit, binds 16S rRNA. Zn(2+) is required as a cofactor.

The protein localises to the cytoplasm. One of several proteins that assist in the late maturation steps of the functional core of the 30S ribosomal subunit. Helps release RbfA from mature subunits. May play a role in the assembly of ribosomal proteins into the subunit. Circularly permuted GTPase that catalyzes slow GTP hydrolysis, GTPase activity is stimulated by the 30S ribosomal subunit. The sequence is that of Small ribosomal subunit biogenesis GTPase RsgA from Parasynechococcus marenigrum (strain WH8102).